A 322-amino-acid polypeptide reads, in one-letter code: Ornithine carbamoyltransferase (322 aa).

Residues S67–T70, Q94, R118, and H145–Q148 each bind carbamoyl phosphate. Residues N176, D240, and S244 to M245 contribute to the L-ornithine site. Carbamoyl phosphate-binding positions include C280 to L281 and R308.

The protein belongs to the aspartate/ornithine carbamoyltransferase superfamily. OTCase family.

The protein localises to the cytoplasm. The catalysed reaction is carbamoyl phosphate + L-ornithine = L-citrulline + phosphate + H(+). It participates in amino-acid biosynthesis; L-arginine biosynthesis; L-arginine from L-ornithine and carbamoyl phosphate: step 1/3. Its function is as follows. Reversibly catalyzes the transfer of the carbamoyl group from carbamoyl phosphate (CP) to the N(epsilon) atom of ornithine (ORN) to produce L-citrulline. The protein is Ornithine carbamoyltransferase of Oceanobacillus iheyensis (strain DSM 14371 / CIP 107618 / JCM 11309 / KCTC 3954 / HTE831).